The following is a 660-amino-acid chain: Bifunctional polymyxin resistance protein ArnA (660 aa).

A formyltransferase ArnAFT region spans residues 1–304; the sequence is MKAIVFAYHD…DMSMVTDVRV (304 aa). Catalysis depends on histidine 104, which acts as the Proton donor; for formyltransferase activity. (6R)-10-formyltetrahydrofolate-binding positions include arginine 114 and 136–140; that span reads VLKPD. The interval 314–660 is dehydrogenase ArnADH; the sequence is HRKRVLILGV…RGAVEELGKN (347 aa). NAD(+) is bound by residues aspartate 347 and 368–369; that span reads DI. UDP-alpha-D-glucuronate is bound by residues alanine 393, tyrosine 398, and 432–433; that span reads TS. Catalysis depends on glutamate 434, which acts as the Proton acceptor; for decarboxylase activity. Residues arginine 460, asparagine 492, 526 to 535, and tyrosine 613 each bind UDP-alpha-D-glucuronate; that span reads KLVDGGEQKR. Arginine 619 serves as the catalytic Proton donor; for decarboxylase activity.

In the N-terminal section; belongs to the Fmt family. UDP-L-Ara4N formyltransferase subfamily. It in the C-terminal section; belongs to the NAD(P)-dependent epimerase/dehydratase family. UDP-glucuronic acid decarboxylase subfamily. In terms of assembly, homohexamer, formed by a dimer of trimers.

It carries out the reaction UDP-alpha-D-glucuronate + NAD(+) = UDP-beta-L-threo-pentopyranos-4-ulose + CO2 + NADH. The catalysed reaction is UDP-4-amino-4-deoxy-beta-L-arabinose + (6R)-10-formyltetrahydrofolate = UDP-4-deoxy-4-formamido-beta-L-arabinose + (6S)-5,6,7,8-tetrahydrofolate + H(+). It participates in nucleotide-sugar biosynthesis; UDP-4-deoxy-4-formamido-beta-L-arabinose biosynthesis; UDP-4-deoxy-4-formamido-beta-L-arabinose from UDP-alpha-D-glucuronate: step 1/3. Its pathway is nucleotide-sugar biosynthesis; UDP-4-deoxy-4-formamido-beta-L-arabinose biosynthesis; UDP-4-deoxy-4-formamido-beta-L-arabinose from UDP-alpha-D-glucuronate: step 3/3. The protein operates within bacterial outer membrane biogenesis; lipopolysaccharide biosynthesis. Bifunctional enzyme that catalyzes the oxidative decarboxylation of UDP-glucuronic acid (UDP-GlcUA) to UDP-4-keto-arabinose (UDP-Ara4O) and the addition of a formyl group to UDP-4-amino-4-deoxy-L-arabinose (UDP-L-Ara4N) to form UDP-L-4-formamido-arabinose (UDP-L-Ara4FN). The modified arabinose is attached to lipid A and is required for resistance to polymyxin and cationic antimicrobial peptides. In Photorhabdus laumondii subsp. laumondii (strain DSM 15139 / CIP 105565 / TT01) (Photorhabdus luminescens subsp. laumondii), this protein is Bifunctional polymyxin resistance protein ArnA.